A 308-amino-acid polypeptide reads, in one-letter code: B3 domain-containing protein REM23 (308 aa).

The TF-B3 1 DNA-binding region spans 19–114; that stretch reads FFKVLKRSDM…SFTVKIFNKD (96 aa). The interval 117–198 is disordered; the sequence is EMMQPPQSRA…TERTQNSKRT (82 aa). Residues 121 to 133 are compositionally biased toward polar residues; sequence PPQSRASFASSSR. A compositionally biased stretch (basic and acidic residues) spans 134–145; the sequence is VKTEQDVKREEE. The span at 149–166 shows a compositional bias: polar residues; the sequence is SSDSRSRGPTTAAETNRG. Basic residues predominate over residues 168–177; the sequence is SYKRKLNFGK. Positions 178 to 198 are enriched in basic and acidic residues; that stretch reads KKAEETQTYKRTERTQNSKRT. The TF-B3 2 DNA-binding region spans 216 to 308; the sequence is VAGFKIFISK…LELLLVVSKP (93 aa).

The protein resides in the nucleus. The sequence is that of B3 domain-containing protein REM23 (REM23) from Arabidopsis thaliana (Mouse-ear cress).